Reading from the N-terminus, the 566-residue chain is Amidophosphoribosyltransferase 1, chloroplastic (566 aa).

Over residues 1-13 the composition is skewed to low complexity; sequence MAATTSFSSSLSL. 2 disordered regions span residues 1–28 and 58–87; these read MAAT…QPLP and VSSY…DEKP. Residues 1–58 constitute a chloroplast transit peptide; it reads MAATTSFSSSLSLITKPNNSSYTNQPLPLFPKPFLKPPHLSLLPSPLSSPPPSLIHGV. Residues 15 to 25 show a composition bias toward polar residues; it reads TKPNNSSYTNQ. Residues 59–68 are compositionally biased toward low complexity; the sequence is SSYFSSPSPS. Residues 70–87 show a composition bias toward basic and acidic residues; it reads DNSHTPFDYHNDEDDEKP. The Nucleophile role is filled by cysteine 91. Positions 91–311 constitute a Glutamine amidotransferase type-2 domain; that stretch reads CGVVGIYGDP…PGEVLVVDKD (221 aa). [4Fe-4S] cluster contacts are provided by cysteine 327, cysteine 473, cysteine 524, and cysteine 527.

This sequence in the C-terminal section; belongs to the purine/pyrimidine phosphoribosyltransferase family. [4Fe-4S] cluster is required as a cofactor. It depends on Mg(2+) as a cofactor. Expressed in flowers and roots. Also present in leaves, and, to a lower extent, in cotyledons.

It is found in the plastid. The protein localises to the chloroplast stroma. The enzyme catalyses 5-phospho-beta-D-ribosylamine + L-glutamate + diphosphate = 5-phospho-alpha-D-ribose 1-diphosphate + L-glutamine + H2O. Its pathway is purine metabolism; IMP biosynthesis via de novo pathway; N(1)-(5-phospho-D-ribosyl)glycinamide from 5-phospho-alpha-D-ribose 1-diphosphate: step 1/2. Its function is as follows. Catalyzes the first committed step of 'de novo' purine biosynthesis from glutamine. Involved in plastid biogenesis and cell division. In Arabidopsis thaliana (Mouse-ear cress), this protein is Amidophosphoribosyltransferase 1, chloroplastic (ASE1).